A 435-amino-acid chain; its full sequence is Ribosomal protein uS12 methylthiotransferase RimO (435 aa).

One can recognise an MTTase N-terminal domain in the interval 2–118 (KKFHIVKLGC…IVEKIENGEY (117 aa)). [4Fe-4S] cluster contacts are provided by Cys-11, Cys-47, Cys-81, Cys-150, Cys-154, and Cys-157. The Radical SAM core domain maps to 136–364 (IPDSHYAYVK…MTVQSEISKN (229 aa)). Positions 367–435 (EKYIGETLEV…EYDLEGEIVE (69 aa)) constitute a TRAM domain.

Belongs to the methylthiotransferase family. RimO subfamily. The cofactor is [4Fe-4S] cluster.

The protein resides in the cytoplasm. It carries out the reaction L-aspartate(89)-[ribosomal protein uS12]-hydrogen + (sulfur carrier)-SH + AH2 + 2 S-adenosyl-L-methionine = 3-methylsulfanyl-L-aspartate(89)-[ribosomal protein uS12]-hydrogen + (sulfur carrier)-H + 5'-deoxyadenosine + L-methionine + A + S-adenosyl-L-homocysteine + 2 H(+). In terms of biological role, catalyzes the methylthiolation of an aspartic acid residue of ribosomal protein uS12. The polypeptide is Ribosomal protein uS12 methylthiotransferase RimO (Petrotoga mobilis (strain DSM 10674 / SJ95)).